A 120-amino-acid chain; its full sequence is Large ribosomal subunit protein uL18 (120 aa).

Belongs to the universal ribosomal protein uL18 family. As to quaternary structure, part of the 50S ribosomal subunit; part of the 5S rRNA/L5/L18/L25 subcomplex. Contacts the 5S and 23S rRNAs.

In terms of biological role, this is one of the proteins that bind and probably mediate the attachment of the 5S RNA into the large ribosomal subunit, where it forms part of the central protuberance. The polypeptide is Large ribosomal subunit protein uL18 (Geobacillus kaustophilus (strain HTA426)).